Consider the following 710-residue polypeptide: Dihydroxyacetone synthase (710 aa).

Thiamine diphosphate contacts are provided by residues histidine 78 and 128–130 (GPL). Mg(2+)-binding residues include aspartate 169, asparagine 199, and valine 201. Asparagine 199 serves as a coordination point for thiamine diphosphate. Thiamine diphosphate contacts are provided by histidine 275, glutamate 433, and phenylalanine 461. The active-site Proton donor is the glutamate 433. Residues 708–710 (NKL) carry the Microbody targeting signal motif.

Belongs to the transketolase family. Requires Mg(2+) as cofactor. It depends on Ca(2+) as a cofactor. Mn(2+) is required as a cofactor. Co(2+) serves as cofactor. The cofactor is thiamine diphosphate.

It localises to the peroxisome. The catalysed reaction is D-xylulose 5-phosphate + formaldehyde = dihydroxyacetone + D-glyceraldehyde 3-phosphate. This is the major methanol assimilatory enzyme from the methylotrophic Hansenula polymorpha. The protein is Dihydroxyacetone synthase (DAS) of Pichia angusta (Yeast).